We begin with the raw amino-acid sequence, 871 residues long: Leucine--tRNA ligase (871 aa).

A 'HIGH' region motif is present at residues 42–52 (PYPSGSLHMGH). Residues 634-638 (TMSKS) carry the 'KMSKS' region motif. K637 lines the ATP pocket.

It belongs to the class-I aminoacyl-tRNA synthetase family.

It localises to the cytoplasm. It carries out the reaction tRNA(Leu) + L-leucine + ATP = L-leucyl-tRNA(Leu) + AMP + diphosphate. This chain is Leucine--tRNA ligase, found in Nostoc punctiforme (strain ATCC 29133 / PCC 73102).